A 68-amino-acid chain; its full sequence is Negative regulatory protein YxlD (68 aa).

A run of 2 helical transmembrane segments spans residues Glu-5–Ile-25 and Trp-37–Ile-57.

It is found in the cell membrane. Together with YxlE, is important for negative regulation of sigma Y activity, being the major negative regulator. This is Negative regulatory protein YxlD (yxlD) from Bacillus subtilis (strain 168).